The chain runs to 256 residues: Tryptophan synthase alpha chain (256 aa).

Active-site proton acceptor residues include glutamate 48 and aspartate 59.

This sequence belongs to the TrpA family. In terms of assembly, tetramer of two alpha and two beta chains.

It carries out the reaction (1S,2R)-1-C-(indol-3-yl)glycerol 3-phosphate + L-serine = D-glyceraldehyde 3-phosphate + L-tryptophan + H2O. The protein operates within amino-acid biosynthesis; L-tryptophan biosynthesis; L-tryptophan from chorismate: step 5/5. The alpha subunit is responsible for the aldol cleavage of indoleglycerol phosphate to indole and glyceraldehyde 3-phosphate. The sequence is that of Tryptophan synthase alpha chain from Caldicellulosiruptor bescii (strain ATCC BAA-1888 / DSM 6725 / KCTC 15123 / Z-1320) (Anaerocellum thermophilum).